A 624-amino-acid chain; its full sequence is Chaperone protein HtpG (624 aa).

Positions 1–336 (MKTQKKEVYN…SSDLPLNISR (336 aa)) are a; substrate-binding. Positions 337–552 (EILQDNSITE…STEMTTQMAK (216 aa)) are b. Residues 553–624 (LFSAAGQSVP…ISRMNKLLIK (72 aa)) are c.

Belongs to the heat shock protein 90 family. In terms of assembly, homodimer.

Its subcellular location is the cytoplasm. In terms of biological role, molecular chaperone. Has ATPase activity. The chain is Chaperone protein HtpG from Buchnera aphidicola subsp. Acyrthosiphon pisum (strain APS) (Acyrthosiphon pisum symbiotic bacterium).